The sequence spans 348 residues: Short-wave-sensitive opsin 1 (348 aa).

Over methionine 1–alanine 33 the chain is Extracellular. Residue asparagine 14 is glycosylated (N-linked (GlcNAc...) asparagine). Residues phenylalanine 34 to alanine 58 traverse the membrane as a helical segment. Topologically, residues threonine 59–asparagine 70 are cytoplasmic. Residues tyrosine 71–cysteine 96 traverse the membrane as a helical segment. Residues asparagine 97 to glutamate 110 lie on the Extracellular side of the membrane. An intrachain disulfide couples cysteine 107 to cysteine 184. A helical transmembrane segment spans residues glycine 111 to phenylalanine 130. The Cytoplasmic segment spans residues glutamate 131 to histidine 149. Residues alanine 150–serine 173 form a helical membrane-spanning segment. The Extracellular segment spans residues arginine 174–serine 199. A helical transmembrane segment spans residues tyrosine 200–leucine 227. Topologically, residues lysine 228–arginine 249 are cytoplasmic. A helical transmembrane segment spans residues methionine 250–valine 273. At asparagine 274–aspartate 281 the chain is on the extracellular side. Residues leucine 282–methionine 306 form a helical membrane-spanning segment. Lysine 293 is subject to N6-(retinylidene)lysine. Residues asparagine 307–asparagine 348 are Cytoplasmic-facing.

Belongs to the G-protein coupled receptor 1 family. Opsin subfamily. Phosphorylated on some or all of the serine and threonine residues present in the C-terminal region.

Its subcellular location is the cell membrane. It localises to the photoreceptor inner segment. It is found in the cell projection. The protein localises to the cilium. The protein resides in the photoreceptor outer segment. Its subcellular location is the cytoplasm. It localises to the perinuclear region. Visual pigments are the light-absorbing molecules that mediate vision. They consist of an apoprotein, opsin, covalently linked to cis-retinal. Required for the maintenance of cone outer segment organization in the ventral retina, but not essential for the maintenance of functioning cone photoreceptors. Involved in ensuring correct abundance and localization of retinal membrane proteins. May increase spectral sensitivity in dim light. The chain is Short-wave-sensitive opsin 1 (OPN1SW) from Pan paniscus (Pygmy chimpanzee).